The following is an 82-amino-acid chain: Acyl carrier protein (82 aa).

A Carrier domain is found at 4-79; that stretch reads EKIFQELKNI…DVVDIIESNL (76 aa). An O-(pantetheine 4'-phosphoryl)serine modification is found at S39.

It belongs to the acyl carrier protein (ACP) family. In terms of processing, 4'-phosphopantetheine is transferred from CoA to a specific serine of apo-ACP by AcpS. This modification is essential for activity because fatty acids are bound in thioester linkage to the sulfhydryl of the prosthetic group.

It localises to the cytoplasm. It participates in lipid metabolism; fatty acid biosynthesis. Functionally, carrier of the growing fatty acid chain in fatty acid biosynthesis. The polypeptide is Acyl carrier protein (Coprothermobacter proteolyticus (strain ATCC 35245 / DSM 5265 / OCM 4 / BT)).